A 369-amino-acid chain; its full sequence is Glutamate 5-kinase (369 aa).

Lys-14 contributes to the ATP binding site. Positions 54, 141, and 153 each coordinate substrate. Residues 173 to 174 (SD) and 215 to 221 (TGGMVTK) each bind ATP. In terms of domain architecture, PUA spans 277-355 (RGRLHLDPGA…SELATALGPA (79 aa)).

Belongs to the glutamate 5-kinase family.

It is found in the cytoplasm. It catalyses the reaction L-glutamate + ATP = L-glutamyl 5-phosphate + ADP. The protein operates within amino-acid biosynthesis; L-proline biosynthesis; L-glutamate 5-semialdehyde from L-glutamate: step 1/2. Its function is as follows. Catalyzes the transfer of a phosphate group to glutamate to form L-glutamate 5-phosphate. The chain is Glutamate 5-kinase from Salinispora arenicola (strain CNS-205).